Here is a 333-residue protein sequence, read N- to C-terminus: Phosphate acyltransferase (333 aa).

This sequence belongs to the PlsX family. In terms of assembly, homodimer. Probably interacts with PlsY.

It is found in the cytoplasm. The catalysed reaction is a fatty acyl-[ACP] + phosphate = an acyl phosphate + holo-[ACP]. The protein operates within lipid metabolism; phospholipid metabolism. Catalyzes the reversible formation of acyl-phosphate (acyl-PO(4)) from acyl-[acyl-carrier-protein] (acyl-ACP). This enzyme utilizes acyl-ACP as fatty acyl donor, but not acyl-CoA. The polypeptide is Phosphate acyltransferase (Clostridium beijerinckii (strain ATCC 51743 / NCIMB 8052) (Clostridium acetobutylicum)).